The primary structure comprises 242 residues: uncharacterized protein (242 aa).

The span at 1-12 shows a compositional bias: basic and acidic residues; it reads MKLRRERFERRN. The disordered stretch occupies residues 1–21; sequence MKLRRERFERRNGSGKNSQSS. The Cytoplasmic segment spans residues 1 to 23; it reads MKLRRERFERRNGSGKNSQSSSS. Residues 24–44 form a helical membrane-spanning segment; the sequence is WMVTFTDLITLILVFFILLFS. Over 45–242 the chain is Extracellular; sequence MSQIDLQKFK…VIKKSKTTSS (198 aa). The interval 64 to 91 is disordered; the sequence is GNGLQPDQTSIEKKNTSPSDTKKQEDQQ. Basic and acidic residues predominate over residues 73 to 89; the sequence is SIEKKNTSPSDTKKQED. An OmpA-like domain is found at 117–238; the sequence is ERGVVLVLQE…RVEIVIKKSK (122 aa).

Belongs to the MotB family.

It is found in the cell membrane. Functionally, may be involved in some transport function. This is an uncharacterized protein from Bacillus subtilis (strain 168).